A 140-amino-acid polypeptide reads, in one-letter code: UPF0654 protein C22G7.11c (140 aa).

Disordered regions lie at residues 1–88 (MPDP…DPMK) and 110–140 (YKAT…ETQA). The segment covering 24–33 (AKERAEDYIE) has biased composition (basic and acidic residues). The segment covering 34 to 44 (SHSSGQETGDY) has biased composition (polar residues). Residues 54–71 (DYEDLGDYDEDADFDNEE) are compositionally biased toward acidic residues.

The protein belongs to the UPF0654 (con-6) family.

This Schizosaccharomyces pombe (strain 972 / ATCC 24843) (Fission yeast) protein is UPF0654 protein C22G7.11c.